A 1217-amino-acid chain; its full sequence is DNA-directed RNA polymerase subunit beta' (1217 aa).

Zn(2+) contacts are provided by Cys60, Cys62, Cys75, and Cys78. Positions 449, 451, and 453 each coordinate Mg(2+). Residues Cys818, Cys892, Cys899, and Cys902 each contribute to the Zn(2+) site.

Belongs to the RNA polymerase beta' chain family. The RNAP catalytic core consists of 2 alpha, 1 beta, 1 beta' and 1 omega subunit. When a sigma factor is associated with the core the holoenzyme is formed, which can initiate transcription. Mg(2+) serves as cofactor. The cofactor is Zn(2+).

It catalyses the reaction RNA(n) + a ribonucleoside 5'-triphosphate = RNA(n+1) + diphosphate. DNA-dependent RNA polymerase catalyzes the transcription of DNA into RNA using the four ribonucleoside triphosphates as substrates. The polypeptide is DNA-directed RNA polymerase subunit beta' (Enterococcus faecalis (strain ATCC 700802 / V583)).